A 114-amino-acid chain; its full sequence is Putative pterin-4-alpha-carbinolamine dehydratase (114 aa).

Belongs to the pterin-4-alpha-carbinolamine dehydratase family.

The enzyme catalyses (4aS,6R)-4a-hydroxy-L-erythro-5,6,7,8-tetrahydrobiopterin = (6R)-L-erythro-6,7-dihydrobiopterin + H2O. The chain is Putative pterin-4-alpha-carbinolamine dehydratase from Pseudoalteromonas translucida (strain TAC 125).